Here is a 252-residue protein sequence, read N- to C-terminus: Enolase-phosphatase E1 (252 aa).

Mg(2+) contacts are provided by aspartate 18 and glutamate 20. Substrate contacts are provided by residues 149-150 (SS) and lysine 184. Aspartate 209 lines the Mg(2+) pocket.

Belongs to the HAD-like hydrolase superfamily. MasA/MtnC family. In terms of assembly, monomer. The cofactor is Mg(2+).

The protein localises to the cytoplasm. Its subcellular location is the nucleus. The catalysed reaction is 5-methylsulfanyl-2,3-dioxopentyl phosphate + H2O = 1,2-dihydroxy-5-(methylsulfanyl)pent-1-en-3-one + phosphate. It functions in the pathway amino-acid biosynthesis; L-methionine biosynthesis via salvage pathway; L-methionine from S-methyl-5-thio-alpha-D-ribose 1-phosphate: step 3/6. Its pathway is amino-acid biosynthesis; L-methionine biosynthesis via salvage pathway; L-methionine from S-methyl-5-thio-alpha-D-ribose 1-phosphate: step 4/6. Functionally, bifunctional enzyme that catalyzes the enolization of 2,3-diketo-5-methylthiopentyl-1-phosphate (DK-MTP-1-P) into the intermediate 2-hydroxy-3-keto-5-methylthiopentenyl-1-phosphate (HK-MTPenyl-1-P), which is then dephosphorylated to form the acireductone 1,2-dihydroxy-3-keto-5-methylthiopentene (DHK-MTPene). This chain is Enolase-phosphatase E1, found in Naegleria gruberi (Amoeba).